Here is a 192-residue protein sequence, read N- to C-terminus: Fibroblast growth factor 4B (192 aa).

Positions 1-22 are cleaved as a signal peptide; that stretch reads MTVQLALVPILLLGTAAVMVHC.

This sequence belongs to the heparin-binding growth factors family.

It localises to the secreted. Functionally, plays an important role in the regulation of embryonic development, cell proliferation, and cell differentiation. Good candidate for an inducing factor with possible roles both in mesoderm induction at the blastula stage and in the formation of the anteroposterior axis at the gastrula stage. This Xenopus laevis (African clawed frog) protein is Fibroblast growth factor 4B (fgf4-b).